The sequence spans 83 residues: Small ribosomal subunit protein bS16 (83 aa).

The protein belongs to the bacterial ribosomal protein bS16 family.

The polypeptide is Small ribosomal subunit protein bS16 (Shewanella putrefaciens (strain CN-32 / ATCC BAA-453)).